The primary structure comprises 228 residues: Thermonuclease (228 aa).

An N-terminal signal peptide occupies residues 1-23; sequence MTEYLLSAGICMAIVSILLIGMA. The propeptide occupies 24–60; it reads ISNVSKGQYAKRFFYFATSCLVLTLVVVSSLSSSANA. Residues 58–70 are compositionally biased toward polar residues; that stretch reads ANASQTDNGVNRS. The segment at 58 to 83 is disordered; it reads ANASQTDNGVNRSGSEDPTVYSATST. Residue aspartate 100 participates in Ca(2+) binding. Arginine 114 is a catalytic residue. 2 residues coordinate Ca(2+): aspartate 119 and threonine 120. Residues glutamate 122 and arginine 166 contribute to the active site.

This sequence belongs to the thermonuclease family. It depends on Ca(2+) as a cofactor.

It is found in the secreted. It catalyses the reaction Endonucleolytic cleavage to nucleoside 3'-phosphates and 3'-phosphooligonucleotide end-products.. Its function is as follows. Enzyme that catalyzes the hydrolysis of both DNA and RNA at the 5' position of the phosphodiester bond. The polypeptide is Thermonuclease (nuc) (Staphylococcus aureus (strain COL)).